Consider the following 311-residue polypeptide: tRNA pseudouridine synthase B (311 aa).

D49 serves as the catalytic Nucleophile.

The protein belongs to the pseudouridine synthase TruB family. Type 1 subfamily.

It catalyses the reaction uridine(55) in tRNA = pseudouridine(55) in tRNA. Responsible for synthesis of pseudouridine from uracil-55 in the psi GC loop of transfer RNAs. This is tRNA pseudouridine synthase B from Rhizobium meliloti (strain 1021) (Ensifer meliloti).